The following is a 152-amino-acid chain: Mitochondrial fission 1 protein (152 aa).

M1 bears the N-acetylmethionine mark. At 1–122 (MEAVLNELVS…LIDKAMKKDG (122 aa)) the chain is on the cytoplasmic side. A Phosphoserine modification is found at S10. Residues 71-104 (RDYVFYLAVGNYRLKEYEKALKYVRGLLQTEPQN) form a TPR repeat. The chain crosses the membrane as a helical span at residues 123 to 143 (LVGMAIVGGMALGVAGLAGLI). The Mitochondrial intermembrane segment spans residues 144–152 (GLAVSKSKS).

The protein belongs to the FIS1 family. Interacts with DNM1L/DLP1 through the TPR region; may form part of a larger protein complex at the endoplasmic reticulum-mitochondrial interface during mitochondrial fission. Interacts with MARCHF5. Interacts with MIEF1. Interacts with PEX11A, PEX11B and PEX11G. In terms of processing, ubiquitinated by MARCHF5.

The protein resides in the mitochondrion outer membrane. Its subcellular location is the peroxisome membrane. Its function is as follows. Involved in the fragmentation of the mitochondrial network and its perinuclear clustering. Plays a minor role in the recruitment and association of the fission mediator dynamin-related protein 1 (DNM1L) to the mitochondrial surface and mitochondrial fission. May not be essential for the assembly of functional fission complexes and the subsequent membrane scission event. Also mediates peroxisomal fission. May act when the products of fission are directed toward mitochondrial homeostasis, mitophagy, or apoptosis. Can induce cytochrome c release from the mitochondrion to the cytosol, ultimately leading to apoptosis. This is Mitochondrial fission 1 protein (Fis1) from Mus musculus (Mouse).